Reading from the N-terminus, the 42-residue chain is Delta-actitoxin-Ael2d (42 aa).

Intrachain disulfides connect cysteine 4/cysteine 37, cysteine 6/cysteine 30, and cysteine 20/cysteine 38.

The protein belongs to the sea anemone type 3 (BDS) potassium channel toxin family.

Its subcellular location is the secreted. The protein localises to the nematocyst. Functionally, binds to voltage-gated sodium channels (Nav), and slows down the inactivation of mammalian Nav1.2/SCN2A, Nav1.3/SCN3A Nav1.4/SCN4A, Nav1.6/SCN8A, insect DmNav1 and BgNav1 channels, and arachnid VdNav1 channel. This toxin acts by binding to site 3 of sodium channels. The polypeptide is Delta-actitoxin-Ael2d (Anthopleura elegantissima (Green aggregating anemone)).